Reading from the N-terminus, the 507-residue chain is Probable aldehyde dehydrogenase (507 aa).

An NAD(+)-binding site is contributed by 219–225; it reads GFGAEAG. Residues E263 and C302 contribute to the active site.

It belongs to the aldehyde dehydrogenase family.

The enzyme catalyses an aldehyde + NAD(+) + H2O = a carboxylate + NADH + 2 H(+). This is Probable aldehyde dehydrogenase from Mycobacterium bovis (strain ATCC BAA-935 / AF2122/97).